The chain runs to 377 residues: Transcription factor ast-1 (377 aa).

Positions 72 to 143 (PNRMLYNDNT…SNGSSSSTES (72 aa)) are disordered. 2 stretches are compositionally biased toward low complexity: residues 96–109 (STSASSSGNSTSSK) and 118–142 (TESSNSSGNGAAATSGSNGSSSSTE). Positions 214-294 (TQLWQFLLEL…HGKRYAYKFD (81 aa)) form a DNA-binding region, ETS.

The protein belongs to the ETS family. Expressed in the A-neurons in the male-specific genital sensilla (simple sense organs) known as rays.

It is found in the nucleus. It localises to the cell projection. The protein localises to the neuron projection. Transcription factor. Probably binds to DNA sequences containing the consensus motif 5'-CGGA[AT][AG]-3'. Positively modulates expression of dopamine pathway genes, acting as a terminal selector for differentiation of dopaminergic neurons; may act in concert with homeobox proteins ceh-40, ceh-43 and ceh-20. Required for axon navigation in some interneurons, perhaps acting in the same pathways as basement membrane protein nid-1 and unc-6/netrin. Plays a role in the differentiation of the ventral cord pioneer neuron AVG. Required for morphogenesis of the pharynx. This is Transcription factor ast-1 from Caenorhabditis elegans.